The chain runs to 197 residues: NADH-quinone oxidoreductase subunit C (197 aa).

This sequence belongs to the complex I 30 kDa subunit family. As to quaternary structure, NDH-1 is composed of 14 different subunits. Subunits NuoB, C, D, E, F, and G constitute the peripheral sector of the complex.

Its subcellular location is the cell inner membrane. The enzyme catalyses a quinone + NADH + 5 H(+)(in) = a quinol + NAD(+) + 4 H(+)(out). Its function is as follows. NDH-1 shuttles electrons from NADH, via FMN and iron-sulfur (Fe-S) centers, to quinones in the respiratory chain. The immediate electron acceptor for the enzyme in this species is believed to be ubiquinone. Couples the redox reaction to proton translocation (for every two electrons transferred, four hydrogen ions are translocated across the cytoplasmic membrane), and thus conserves the redox energy in a proton gradient. The protein is NADH-quinone oxidoreductase subunit C of Neisseria gonorrhoeae (strain ATCC 700825 / FA 1090).